Consider the following 517-residue polypeptide: Probable bifunctional methylthioribulose-1-phosphate dehydratase/enolase-phosphatase E1 (517 aa).

A methylthioribulose-1-phosphate dehydratase region spans residues 1 to 242 (MACGGCSCEA…CIKLYQLGID (242 aa)). A substrate-binding site is contributed by C114. The Zn(2+) site is built by H132 and H134. The Proton donor/acceptor; for methylthioribulose-1-phosphate dehydratase activity role is filled by E157. H207 provides a ligand contact to Zn(2+). An enolase-phosphatase E1 region spans residues 278 to 517 (VVLDIEGTTT…FRTIKSFSEI (240 aa)). The Mg(2+) site is built by D281 and E283. Residues 416–417 (SS) and K450 each bind substrate. D476 is a Mg(2+) binding site.

It in the N-terminal section; belongs to the aldolase class II family. MtnB subfamily. In the C-terminal section; belongs to the HAD-like hydrolase superfamily. MasA/MtnC family. The cofactor is Zn(2+). Mg(2+) serves as cofactor.

The enzyme catalyses 5-(methylsulfanyl)-D-ribulose 1-phosphate = 5-methylsulfanyl-2,3-dioxopentyl phosphate + H2O. The catalysed reaction is 5-methylsulfanyl-2,3-dioxopentyl phosphate + H2O = 1,2-dihydroxy-5-(methylsulfanyl)pent-1-en-3-one + phosphate. It functions in the pathway amino-acid biosynthesis; L-methionine biosynthesis via salvage pathway; L-methionine from S-methyl-5-thio-alpha-D-ribose 1-phosphate: step 2/6. The protein operates within amino-acid biosynthesis; L-methionine biosynthesis via salvage pathway; L-methionine from S-methyl-5-thio-alpha-D-ribose 1-phosphate: step 3/6. Its pathway is amino-acid biosynthesis; L-methionine biosynthesis via salvage pathway; L-methionine from S-methyl-5-thio-alpha-D-ribose 1-phosphate: step 4/6. This is Probable bifunctional methylthioribulose-1-phosphate dehydratase/enolase-phosphatase E1 from Sorghum bicolor (Sorghum).